A 721-amino-acid polypeptide reads, in one-letter code: Protein mu-NS (721 aa).

An interaction with sigma-NS region spans residues 1 to 13; sequence MASFKGFSVNTVP. The segment at 1 to 38 is RNA-binding; sequence MASFKGFSVNTVPVSKAKRDISSLAATPGIRSQPFTPS. The interaction with mu-2 stretch occupies residues 14 to 40; it reads VSKAKRDISSLAATPGIRSQPFTPSVD. Residues 471 to 721 form an involved in the formation of factory-like inclusions region; that stretch reads SSDMVDGIKL…IDFSVPTDEL (251 aa). 2 coiled-coil regions span residues 523–560 and 628–686; these read LLSQ…SAQA and QMNG…NQRQ.

Belongs to the orthoreovirus mu-NS protein family. As to quaternary structure, interacts with mu-2. Interacts with sigma-NS; in viral factories. Interacts with the inner capsid proteins lambda-1 and sigma-2, and outer capsid protein lambda-2; in viral factories. Post-translationally, the N-terminus is blocked.

It localises to the host cytoplasm. In terms of biological role, non-structural protein implicated with protein sigma-NS in forming the matrix of viral factories, which are large inclusions in the host cytoplasm where replication intermediates are assembled and viral RNA replication takes place. Together with mu-2, recruits the other core proteins to these factories. The polypeptide is Protein mu-NS (M3) (Mammalia (T1L)).